A 213-amino-acid polypeptide reads, in one-letter code: Viral dihydrofolate reductase (213 aa).

Residues L4–K184 enclose the DHFR domain. Residues A10 and G16 to H22 each bind NADP(+). D31–Q36 provides a ligand contact to substrate. K54–T56 contacts NADP(+). R70 is a binding site for substrate. NADP(+)-binding positions include S76 to K78 and G116 to D123.

This sequence belongs to the dihydrofolate reductase family.

The enzyme catalyses (6S)-5,6,7,8-tetrahydrofolate + NADP(+) = 7,8-dihydrofolate + NADPH + H(+). The protein operates within cofactor biosynthesis; tetrahydrofolate biosynthesis; 5,6,7,8-tetrahydrofolate from 7,8-dihydrofolate: step 1/1. Functionally, key enzyme in folate metabolism. Catalyzes an essential reaction for de novo glycine and purine synthesis, and for DNA precursor synthesis. In Saimiri sciureus (Common squirrel monkey), this protein is Viral dihydrofolate reductase (DHFR).